We begin with the raw amino-acid sequence, 1290 residues long: MSGPLEGADGGGDPRPGESFCPGGVPSPGPPQHRPCPGPSLADDTDANSNGSSGNESNGHESRGASQRSSHSSSSGNGKDSALLETTESSKSTNSQSPSPPSSSIAYSLLSASSEQDNPSTSGCSSEQSARARTQKELMTALRELKLRLPPERRGKGRSGTLATLQYALACVKQVQANQEYYQQWSLEEGEPCSMDMSTYTLEELEHITSEYTLQNQDTFSVAVSFLTGRIVYISEQAAVLLRCKRDVFRGTRFSELLAPQDVGVFYGSTAPSRLPTWGTGASAGSGLRDFTQEKSVFCRIRGGPDRDPGPRYQPFRLTPYVTKIRVSDGAPAQPCCLLIAERIHSGYEAPRIPPDKRIFTTRHTPSCLFQDVDERAAPLLGYLPQDLLGAPVLLFLHPEDRPLMLAIHKKILQLAGQPFDHSPIRFCARNGEYVTMDTSWAGFVHPWSRKVAFVLGRHKVRTAPLNEDVFTPPAPSPAPSLDTDIQELSEQIHRLLLQPVHSPSPTGLCGVGAVTSPGPLHSPGSSSDSNGGDAEGPGPPAPVTFQQICKDVHLVKHQGQQLFIESRARPQSRPRLPATGTFKAKALPCQSPDPELEAGSAPVQAPLALVPEEAERKEASSCSYQQINCLDSILRYLESCNLPSTTKRKCASSSSYTTSSASDDDRQRTGPVSVGTKKDPPSAALSGEGATPRKEPVVGGTLSPLALANKAESVVSVTSQCSFSSTIVHVGDKKPPESDIIMMEDLPGLAPGPAPSPAPSPTVAPDPAPDAYRPVGLTKAVLSLHTQKEEQAFLSRFRDLGRLRGLDSSSTAPSALGERGCHHGPAPPSRRHHCRSKAKRSRHHQNPRAEAPCYVSHPSPVPPSTPWPTPPATTPFPAVVQPYPLPVFSPRGGPQPLPPAPTSVPPAAFPAPLVTPMVALVLPNYLFPTPSSYPYGALQTPAEGPPTPASHSPSPSLPALAPSPPHRPDSPLFNSRCSSPLQLNLLQLEELPRAEGAAVAGGPGSSAGPPPPSAEAAEPEARLAEVTESSNQDALSGSSDLLELLLQEDSRSGTGSAASGSLGSGLGSGSGSGSHEGGSTSASITRSSQSSHTSKYFGSIDSSEAEAGAARGGAEPGDQVIKYVLQDPIWLLMANADQRVMMTYQVPSRDMTSVLKQDRERLRAMQKQQPRFSEDQRRELGAVHSWVRKGQLPRALDVMACVDCGSSTQDPGHPDDPLFSELDGLGLEPMEEGGGEQGSSGGGSGEGEGCEEAQGGAKASSSQDLAMEEEEEGRSSSSPALPTAGNCTS.

A disordered region spans residues 1–134 (MSGPLEGADG…SSEQSARART (134 aa)). The interval 1 to 151 (MSGPLEGADG…LRELKLRLPP (151 aa)) is interaction with BTRC. A compositionally biased stretch (pro residues) spans 25–38 (VPSPGPPQHRPCPG). Low complexity-rich tracts occupy residues 48–57 (NSNGSSGNES) and 64–115 (GASQ…ASSE). The span at 116–132 (QDNPSTSGCSSEQSARA) shows a compositional bias: polar residues. At threonine 121 the chain carries Phosphothreonine; by CSNK1E. 2 positions are modified to phosphoserine; by CSNK1E: serine 122 and serine 126. The short motif at 138–147 (LMTALRELKL) is the Nuclear export signal 1 element. PAS domains lie at 208–275 (ITSE…PSRL) and 348–414 (YEAP…KILQ). Residues 422–465 (HSPIRFCARNGEYVTMDTSWAGFVHPWSRKVAFVLGRHKVRTAP) form the PAC domain. Positions 489–498 (LSEQIHRLLL) match the Nuclear export signal 2 motif. Disordered regions lie at residues 508 to 544 (GLCG…PAPV) and 646 to 698 (TTKR…KEPV). Composition is skewed to low complexity over residues 517 to 533 (SPGP…SNGG) and 652 to 662 (ASSSSYTTSSA). The tract at residues 596–815 (ELEAGSAPVQ…GLDSSSTAPS (220 aa)) is required for phosphorylation by CSNK1E. Phosphoserine occurs at positions 661, 663, and 704. 3 disordered regions span residues 749–772 (GLAP…APDA), 805–874 (RGLD…PPAT), and 938–977 (ALQT…FNSR). Residues 751 to 769 (APGPAPSPAPSPTVAPDPA) show a composition bias toward pro residues. Phosphoserine is present on serine 815. The Nuclear localization signal motif lies at 827 to 843 (APPSRRHHCRSKAKRSR). The span at 830-847 (SRRHHCRSKAKRSRHHQN) shows a compositional bias: basic residues. Pro residues predominate over residues 860-874 (SPVPPSTPWPTPPAT). The span at 950–961 (ASHSPSPSLPAL) shows a compositional bias: low complexity. Phosphoserine occurs at positions 979 and 980. Positions 982 to 989 (LQLNLLQL) match the Nuclear export signal 3 motif. Positions 996–1037 (EGAAVAGGPGSSAGPPPPSAEAAEPEARLAEVTESSNQDALS) are disordered. An LXXLL motif is present at residues 1043-1047 (LELLL). Residues 1051 to 1062 (SRSGTGSAASGS) show a composition bias toward low complexity. Disordered regions lie at residues 1051-1098 (SRSG…SKYF) and 1207-1290 (SSTQ…NCTS). The segment covering 1063–1077 (LGSGLGSGSGSGSHE) has biased composition (gly residues). The span at 1078 to 1095 (GGSTSASITRSSQSSHTS) shows a compositional bias: low complexity. The interval 1149 to 1290 (SRDMTSVLKQ…ALPTAGNCTS (142 aa)) is CRY binding domain. Over residues 1236-1248 (GEQGSSGGGSGEG) the composition is skewed to gly residues.

As to quaternary structure, homodimer. Component of the circadian core oscillator, which includes the CRY proteins, CLOCK or NPAS2, BMAL1 or BMAL2, CSNK1D and/or CSNK1E, TIMELESS, and the PER proteins. Interacts directly with TIMELESS, PER2, PER3, CRY1 and CRY2. Interacts with BMAL1 and CLOCK. Interacts with GPRASP1. Interacts (phosphorylated) with BTRC and FBXW11; the interactions trigger proteasomal degradation. Interacts with NONO, WDR5 and SFPQ. Interacts with USP2. Interacts with HNF4A. Post-translationally, phosphorylated on serine residues by CSNK1D, CSNK1E and probably also by CSNK1G2. Phosphorylation by CSNK1D or CSNK1E promotes nuclear location of PER proteins as well as ubiquitination and subsequent degradation. May be dephosphorylated by PP1. Ubiquitinated; requires phosphorylation by CSNK1E and interaction with BTRC and FBXW11. Deubiquitinated by USP2. In terms of tissue distribution, widely expressed. Expressed in hair follicles (at protein level). Found in heart, brain, placenta, lung, liver, skeletal muscle, pancreas, kidney, spleen, thymus, prostate, testis, ovary and small intestine. Highest level in skeletal muscle.

It localises to the nucleus. The protein localises to the cytoplasm. Its function is as follows. Transcriptional repressor which forms a core component of the circadian clock. The circadian clock, an internal time-keeping system, regulates various physiological processes through the generation of approximately 24 hour circadian rhythms in gene expression, which are translated into rhythms in metabolism and behavior. It is derived from the Latin roots 'circa' (about) and 'diem' (day) and acts as an important regulator of a wide array of physiological functions including metabolism, sleep, body temperature, blood pressure, endocrine, immune, cardiovascular, and renal function. Consists of two major components: the central clock, residing in the suprachiasmatic nucleus (SCN) of the brain, and the peripheral clocks that are present in nearly every tissue and organ system. Both the central and peripheral clocks can be reset by environmental cues, also known as Zeitgebers (German for 'timegivers'). The predominant Zeitgeber for the central clock is light, which is sensed by retina and signals directly to the SCN. The central clock entrains the peripheral clocks through neuronal and hormonal signals, body temperature and feeding-related cues, aligning all clocks with the external light/dark cycle. Circadian rhythms allow an organism to achieve temporal homeostasis with its environment at the molecular level by regulating gene expression to create a peak of protein expression once every 24 hours to control when a particular physiological process is most active with respect to the solar day. Transcription and translation of core clock components (CLOCK, NPAS2, BMAL1, BMAL2, PER1, PER2, PER3, CRY1 and CRY2) plays a critical role in rhythm generation, whereas delays imposed by post-translational modifications (PTMs) are important for determining the period (tau) of the rhythms (tau refers to the period of a rhythm and is the length, in time, of one complete cycle). A diurnal rhythm is synchronized with the day/night cycle, while the ultradian and infradian rhythms have a period shorter and longer than 24 hours, respectively. Disruptions in the circadian rhythms contribute to the pathology of cardiovascular diseases, cancer, metabolic syndromes and aging. A transcription/translation feedback loop (TTFL) forms the core of the molecular circadian clock mechanism. Transcription factors, CLOCK or NPAS2 and BMAL1 or BMAL2, form the positive limb of the feedback loop, act in the form of a heterodimer and activate the transcription of core clock genes and clock-controlled genes (involved in key metabolic processes), harboring E-box elements (5'-CACGTG-3') within their promoters. The core clock genes: PER1/2/3 and CRY1/2 which are transcriptional repressors form the negative limb of the feedback loop and interact with the CLOCK|NPAS2-BMAL1|BMAL2 heterodimer inhibiting its activity and thereby negatively regulating their own expression. This heterodimer also activates nuclear receptors NR1D1/2 and RORA/B/G, which form a second feedback loop and which activate and repress BMAL1 transcription, respectively. Regulates circadian target genes expression at post-transcriptional levels, but may not be required for the repression at transcriptional level. Controls PER2 protein decay. Represses CRY2 preventing its repression on CLOCK/BMAL1 target genes such as FXYD5 and SCNN1A in kidney and PPARA in liver. Besides its involvement in the maintenance of the circadian clock, has an important function in the regulation of several processes. Participates in the repression of glucocorticoid receptor NR3C1/GR-induced transcriptional activity by reducing the association of NR3C1/GR to glucocorticoid response elements (GREs) by BMAL1:CLOCK. Plays a role in the modulation of the neuroinflammatory state via the regulation of inflammatory mediators release, such as CCL2 and IL6. In spinal astrocytes, negatively regulates the MAPK14/p38 and MAPK8/JNK MAPK cascades as well as the subsequent activation of NFkappaB. Coordinately regulates the expression of multiple genes that are involved in the regulation of renal sodium reabsorption. Can act as gene expression activator in a gene and tissue specific manner, in kidney enhances WNK1 and SLC12A3 expression in collaboration with CLOCK. Modulates hair follicle cycling. Represses the CLOCK-BMAL1 induced transcription of BHLHE40/DEC1. In Homo sapiens (Human), this protein is Period circadian protein homolog 1 (PER1).